The following is a 478-amino-acid chain: Sedoheptulokinase (478 aa).

This sequence belongs to the FGGY kinase family. In terms of tissue distribution, strongly expressed in liver, kidney and pancreas. Expressed at lower levels in placenta and heart. Very weakly expressed in lung and brain.

Its subcellular location is the cytoplasm. The enzyme catalyses sedoheptulose + ATP = D-sedoheptulose 7-phosphate + ADP + H(+). Functionally, acts as a modulator of macrophage activation through control of glucose metabolism. The polypeptide is Sedoheptulokinase (Homo sapiens (Human)).